The chain runs to 2617 residues: Ubiquitin carboxyl-terminal hydrolase 24 (2617 aa).

Positions 3 to 44 (SEEEQHMTTLLCMGFSDPATIRKALRLAKNDINEAVALLTNE) constitute a UBA domain. A disordered region spans residues 45–99 (RPGLDYGGYEPMDSGGPSPGPGGGPRGDSGSDGSGPSRGGSTGGGGGFDPPPAYH). A phosphoserine mark is found at Ser-62 and Ser-85. Residues 65 to 92 (PGGGPRGDSGSDGSGPSRGGSTGGGGGF) are compositionally biased toward gly residues. The residue at position 939 (Tyr-939) is a Phosphotyrosine. 2 disordered regions span residues 1030–1056 (KTSGSGTPSGSSADSSTSSSSSSSGAF) and 1127–1148 (LLSETSSQSSKSPSLSSKQQHQ). Composition is skewed to low complexity over residues 1031-1056 (TSGSGTPSGSSADSSTSSSSSSSGAF) and 1128-1148 (LSETSSQSSKSPSLSSKQQHQ). A phosphoserine mark is found at Ser-1138 and Ser-1282. The 354-residue stretch at 1686 to 2039 (VGLRNGGATC…NAYMLFYQRV (354 aa)) folds into the USP domain. Cys-1695 functions as the Nucleophile in the catalytic mechanism. A disordered region spans residues 1920–1942 (QDSSSEVGENGRNMDQGGGGSPR). Ser-1940 carries the phosphoserine modification. His-1967 acts as the Proton acceptor in catalysis. A phosphoserine mark is found at Ser-2044, Ser-2074, and Ser-2558. The interval 2060-2087 (AEDLSLSAPSSPEISPQSSPRPHRPNND) is disordered. Residues 2066-2079 (SAPSSPEISPQSSP) show a composition bias toward low complexity. Thr-2562 is subject to Phosphothreonine. Residues 2572-2617 (EKEQSGSSNGSESSPANENGERHLQQGSESPMMIGELRSDLDDVDP) are disordered. The span at 2576–2589 (SGSSNGSESSPANE) shows a compositional bias: low complexity. Position 2601 is a phosphoserine (Ser-2601). A compositionally biased stretch (basic and acidic residues) spans 2608 to 2617 (LRSDLDDVDP).

Belongs to the peptidase C19 family.

The enzyme catalyses Thiol-dependent hydrolysis of ester, thioester, amide, peptide and isopeptide bonds formed by the C-terminal Gly of ubiquitin (a 76-residue protein attached to proteins as an intracellular targeting signal).. In terms of biological role, protease that can remove conjugated ubiquitin from target proteins and polyubiquitin chains. Deubiquitinates DDB2, preventing its proteasomal degradation. The protein is Ubiquitin carboxyl-terminal hydrolase 24 (Usp24) of Mus musculus (Mouse).